The following is a 204-amino-acid chain: Protein C (204 aa).

Positions 1-78 are disordered; that stretch reads MPSFLRGILK…TEQSQRRPKI (78 aa). The span at 10–20 shows a compositional bias: basic and acidic residues; that stretch reads KPKERHHENKN. Positions 25 to 34 are enriched in low complexity; sequence SSDSLTSSYP.

Belongs to the respirovirus protein C family.

The sequence is that of Protein C (P/V/C) from Homo sapiens (Human).